We begin with the raw amino-acid sequence, 151 residues long: Acidic phospholipase A2 1 (151 aa).

The first 27 residues, M1–L27, serve as a signal peptide directing secretion. 7 cysteine pairs are disulfide-bonded: C38–C104, C54–C151, C56–C72, C71–C132, C78–C125, C88–C118, and C111–C123. Positions 55, 57, and 59 each coordinate Ca(2+). Residue H75 is part of the active site. D76 contacts Ca(2+). The active site involves D126.

The protein belongs to the phospholipase A2 family. Group I subfamily. D49 sub-subfamily. The cofactor is Ca(2+). As to expression, expressed by the venom gland.

It localises to the secreted. The catalysed reaction is a 1,2-diacyl-sn-glycero-3-phosphocholine + H2O = a 1-acyl-sn-glycero-3-phosphocholine + a fatty acid + H(+). Functionally, PLA2 catalyzes the calcium-dependent hydrolysis of the 2-acyl groups in 3-sn-phosphoglycerides. The polypeptide is Acidic phospholipase A2 1 (Tropidechis carinatus (Australian rough-scaled snake)).